A 339-amino-acid chain; its full sequence is Probable E3 ubiquitin-protein ligase BAH1-like 1 (339 aa).

The region spanning 1–163 (MKFGAIYEEY…GSVSGRDFKS (163 aa)) is the SPX domain. The RING-type zinc-finger motif lies at 235-284 (CPICLDTLFNPYALSCGHLFCKGCACGAASVYIFQGVKSAPPEAKCPVCR).

Belongs to the RING-type zinc finger family.

The enzyme catalyses S-ubiquitinyl-[E2 ubiquitin-conjugating enzyme]-L-cysteine + [acceptor protein]-L-lysine = [E2 ubiquitin-conjugating enzyme]-L-cysteine + N(6)-ubiquitinyl-[acceptor protein]-L-lysine.. It functions in the pathway protein modification; protein ubiquitination. The protein is Probable E3 ubiquitin-protein ligase BAH1-like 1 of Oryza sativa subsp. indica (Rice).